Consider the following 299-residue polypeptide: 5-azacytidine resistance protein azr1 (299 aa).

The PPM-type phosphatase domain maps to 35 to 293 (KSHFPSPATL…DDTTITCLLI (259 aa)).

Its function is as follows. Confers azacytidine resistance in high copy. This chain is 5-azacytidine resistance protein azr1 (azr1), found in Schizosaccharomyces pombe (strain 972 / ATCC 24843) (Fission yeast).